The following is a 599-amino-acid chain: Fumarate reductase flavoprotein subunit (599 aa).

Residues 12 to 16 (GAGGG), 36 to 38 (VSK), 44 to 52 (THTVAAEGG), 156 to 158 (HFV), and D212 each bind FAD. H45 carries the post-translational modification Tele-8alpha-FAD histidine. Catalysis depends on residues H233 and R249. Residues 357–358 (HY), E381, and 392–398 (RLGSNSL) contribute to the FAD site.

The protein belongs to the FAD-dependent oxidoreductase 2 family. FRD/SDH subfamily. In terms of assembly, part of an enzyme complex containing four subunits: a flavoprotein (FrdA), an iron-sulfur protein (FrdB), and two hydrophobic anchor proteins (FrdC and FrdD). FAD is required as a cofactor.

It localises to the cell inner membrane. It carries out the reaction a quinone + succinate = fumarate + a quinol. The enzyme catalyses a menaquinone + succinate = a menaquinol + fumarate. In Haemophilus influenzae (strain ATCC 51907 / DSM 11121 / KW20 / Rd), this protein is Fumarate reductase flavoprotein subunit (frdA).